A 275-amino-acid polypeptide reads, in one-letter code: 5'-nucleotidase SurE (275 aa).

Positions 14, 15, 46, and 104 each coordinate a divalent metal cation.

This sequence belongs to the SurE nucleotidase family. A divalent metal cation serves as cofactor.

The protein localises to the cytoplasm. It catalyses the reaction a ribonucleoside 5'-phosphate + H2O = a ribonucleoside + phosphate. Functionally, nucleotidase that shows phosphatase activity on nucleoside 5'-monophosphates. The chain is 5'-nucleotidase SurE from Synechocystis sp. (strain ATCC 27184 / PCC 6803 / Kazusa).